The chain runs to 73 residues: Large ribosomal subunit protein bL31 (73 aa).

The Zn(2+) site is built by Cys16, Cys18, Cys37, and Cys40.

The protein belongs to the bacterial ribosomal protein bL31 family. Type A subfamily. As to quaternary structure, part of the 50S ribosomal subunit. Zn(2+) is required as a cofactor.

Its function is as follows. Binds the 23S rRNA. This chain is Large ribosomal subunit protein bL31, found in Pseudomonas syringae pv. syringae (strain B728a).